We begin with the raw amino-acid sequence, 1251 residues long: MLGWVQRVLPQPPGTPRKTKMQEEEEVEPEPEMEAEVEPEPNPEEAETESESMPPEESFKEEEVAVADPSPQETKEAALTSTISLRAQGAEISEMNSPSRRVLTWLMKGVEKVIPQPVHSITEDPAQILGHGSTGDTGCTDEPNEALEAQDTRPGLRLLLWLEQNLERVLPQPPKSSEVWRDEPAVATGAASDPAPPGRPQEMGPKLQARETPSLPTPIPLQPKEEPKEAPAPEPQPGSQAQTSSLPPTRDPARLVAWVLHRLEMALPQPVLHGKIGEQEPDSPGICDVQTISILPGGQVEPDLVLEEVEPPWEDAHQDVSTSPQGTEVVPAYEEENKAVEKMPRELSRIEEEKEDEEEEEEEEEEEEEEEVTEVLLDSCVVSQVGVGQSEEDGTRPQSTSDQKLWEEVGEEAKKEAEEKAKEEAEEVAEEEAEKEPQDWAETKEEPEAEAEAASSGVPATKQHPEVQVEDTDADSCPLMAEENPPSTVLPPPSPAKSDTLIVPSSASGTHRKKLPSEDDEAEELKALSPAESPVVAWSDPTTPKDTDGQDRAASTASTNSAIINDRLQELVKLFKERTEKVKEKLIDPDVTSDEESPKPSPAKKAPEPAPDTKPAEAEPVEEEHYCDMLCCKFKHRPWKKYQFPQSIDPLTNLMYVLWLFFVVMAWNWNCWLIPVRWAFPYQTPDNIHHWLLMDYLCDLIYFLDITVFQTRLQFVRGGDIITDKKDMRNNYLKSRRFKMDLLSLLPLDFLYLKVGVNPLLRLPRCLKYMAFFEFNSRLESILSKAYVYRVIRTTAYLLYSLHLNSCLYYWASAYQGLGSTHWVYDGVGNSYIRCYYFAVKTLITIGGLPDPKTLFEIVFQLLNYFTGVFAFSVMIGQMRDVVGAATAGQTYYRSCMDSTVKYMNFYKIPKSVQNRVKTWYEYTWHSQGMLDESELMVQLPDKMRLDLAIDVNYNIVSKVALFQGCDRQMIFDMLKRLRSVVYLPNDYVCKKGEIGREMYIIQAGQVQVLGGPDGKSVLVTLKAGSVFGEISLLAVGGGNRRTANVVAHGFTNLFILDKKDLNEILVHYPESQKLLRKKARRMLRSNNKPKEEKSVLILPPRAGTPKLFNAALAMTGKMGGKGAKGGKLAHLRARLKELAALEAAAKQQELVEQAKSSQDVKGEEGSAAPDQHTHPKEAATDPPAPRTPPEPPGSPPSSPPPASLGRPEGEEEGPAEPEEHSVRICMSPGPEPGEQILSVKMPEEREEKAE.

Disordered stretches follow at residues Met-1–Lys-75, Ile-121–Asp-151, Gln-172–Pro-252, and Glu-314–Ser-561. The Cytoplasmic portion of the chain corresponds to Met-1 to Tyr-656. Acidic residues predominate over residues Glu-23–Ser-50. Residues Gly-238–Pro-247 are compositionally biased toward polar residues. Over residues Glu-335 to Glu-352 the composition is skewed to basic and acidic residues. Residues Glu-353 to Thr-373 show a composition bias toward acidic residues. Basic and acidic residues predominate over residues Lys-404 to Glu-423. Residues Glu-424 to Glu-434 are compositionally biased toward acidic residues. Residues Lys-435–Glu-446 show a composition bias toward basic and acidic residues. Positions Ala-557–Arg-567 are calmodulin-binding CaM1. The short motif at Leu-568 to Arg-578 is the IQ-like element. Residues Lys-585–Glu-619 are disordered. Residues Val-657–Trp-678 form a helical membrane-spanning segment. At Ala-679 to Asn-687 the chain is on the extracellular side. The helical transmembrane segment at Ile-688–Phe-709 threads the bilayer. At Gln-710–Asp-724 the chain is on the cytoplasmic side. The chain crosses the membrane as a helical span at residues Lys-725 to Ser-744. Residues Leu-745–Leu-760 lie on the Extracellular side of the membrane. A helical membrane pass occupies residues Leu-761 to Phe-773. Over Glu-774–Lys-785 the chain is Cytoplasmic. A helical membrane pass occupies residues Ala-786 to Leu-808. The ion conduction pathway stretch occupies residues Ala-786–Ala-885. At Tyr-809–Ser-831 the chain is on the extracellular side. Helical transmembrane passes span Tyr-832–Ile-858 and Val-859–Gly-884. Residues Ala-885–Glu-1251 lie on the Cytoplasmic side of the membrane. The C-linker stretch occupies residues Ala-888–Gln-964. The interval Arg-968 to Leu-1084 is cyclic nucleotide-binding domain. Gly-1029, Glu-1030, Ser-1032, Arg-1042, and Thr-1043 together coordinate 3',5'-cyclic GMP. A 3',5'-cyclic AMP-binding site is contributed by Arg-1042. Residues Gln-1148–Gln-1154 are calmodulin-binding CaM2. A disordered region spans residues Leu-1151–Glu-1251. The segment covering Pro-1183–Ala-1203 has biased composition (pro residues). Over residues Met-1242 to Glu-1251 the composition is skewed to basic and acidic residues.

It belongs to the cyclic nucleotide-gated cation channel (TC 1.A.1.5) family. CNGB1 subfamily. The rod cyclic nucleotide-gated channel is a heterotetramer composed of CNGA1 and CNGB1 subunits with 3:1 stoichiometry. CNGA1:CNGB1 channel binds Ca(2+)-bound CALM1 via CaM1 and CaM2 regions of the CNGB1 subunit; this interaction modulates the affinity of the channel for cNMPs in response to intracellular Ca(2+) levels. The olfactory cyclic nucleotide-gated channel is a heterotetramer composed of CNGA2, CNGA4 and CNGB1 subunits with 2:1:1 stoichiometry.

Its subcellular location is the cell membrane. The protein localises to the cell projection. The protein resides in the cilium membrane. The enzyme catalyses Ca(2+)(in) = Ca(2+)(out). It carries out the reaction Na(+)(in) = Na(+)(out). It catalyses the reaction K(+)(in) = K(+)(out). The catalysed reaction is NH4(+)(in) = NH4(+)(out). The enzyme catalyses Rb(+)(in) = Rb(+)(out). It carries out the reaction Li(+)(in) = Li(+)(out). It catalyses the reaction Cs(+)(in) = Cs(+)(out). Its function is as follows. Pore-forming subunit of the rod cyclic nucleotide-gated channel. Mediates rod photoresponses at dim light converting transient changes in intracellular cGMP levels into electrical signals. In the dark, cGMP levels are high and keep the channel open enabling a steady inward current carried by Na(+) and Ca(2+) ions that leads to membrane depolarization and neurotransmitter release from synaptic terminals. Upon photon absorption cGMP levels decline leading to channel closure and membrane hyperpolarization that ultimately slows neurotransmitter release and signals the presence of light, the end point of the phototransduction cascade. Pore-forming subunit of the olfactory cyclic nucleotide-gated channel. Operates in the cilia of olfactory sensory neurons where chemical stimulation of the odorant is converted to an electrical signal. Mediates odorant-induced cAMP-dependent Ca(2+) influx triggering neuron depolarization. The rise of intracellular Ca(2+) levels potentiates the olfactory response by activating Ca(2+)-dependent Cl(-) channels, but it also serves as a negative feedback signal to desensitize the channel for rapid adaptation to odorants. Conducts cGMP- and cAMP-gated ion currents, with permeability for monovalent and divalent cations. The selectivity for Ca(2+) over Na(+) increases with cGMP concentrations, whereas the selectivity among monovalent ions is independent of the cGMP levels. In terms of biological role, high affinity rod photoreceptor phosphodiesterase (PDE6)-binding protein that modulates its catalytic properties: it is a regulator of spontaneous activation of rod PDE6, thereby serving to lower rod photoreceptor 'dark noise' and allowing these sensory cells to operate at the single photon detection limit. The polypeptide is Cyclic nucleotide-gated channel beta-1 (Homo sapiens (Human)).